A 533-amino-acid polypeptide reads, in one-letter code: 2-isopropylmalate synthase (533 aa).

One can recognise a Pyruvate carboxyltransferase domain in the interval 8–270; the sequence is VIIFDTTLRD…YFNPFLGRPA (263 aa). The Mn(2+) site is built by D17, H209, H211, and N245. Residues 409–533 are regulatory domain; the sequence is RLELVQVSCG…KEKTPEMLQV (125 aa).

This sequence belongs to the alpha-IPM synthase/homocitrate synthase family. LeuA type 1 subfamily. As to quaternary structure, homodimer. The cofactor is Mn(2+).

It localises to the cytoplasm. It catalyses the reaction 3-methyl-2-oxobutanoate + acetyl-CoA + H2O = (2S)-2-isopropylmalate + CoA + H(+). It functions in the pathway amino-acid biosynthesis; L-leucine biosynthesis; L-leucine from 3-methyl-2-oxobutanoate: step 1/4. Catalyzes the condensation of the acetyl group of acetyl-CoA with 3-methyl-2-oxobutanoate (2-ketoisovalerate) to form 3-carboxy-3-hydroxy-4-methylpentanoate (2-isopropylmalate). In Microcystis aeruginosa, this protein is 2-isopropylmalate synthase.